The primary structure comprises 926 residues: MSRFFATGSDSESEESSSADEITPKAAGTTLRQQALLLSDDEEDTKRVVRSAKDKRFEELTNLIKTIRNAIKIRGISKCLEEFEQLCRAFVKSKTIVDKEGVPKFYIRLLADLEDYLNQLWEDKEGKKKMNKNNAKALSTLRQKIRKYNRDFETEIASYKENPEQSADEEEEKDDIGSGSSESDDDDDDDITAKSFMKKKPQEEEKKAPEASKFLKGAADEESESDDDEDSEDWASDSVGSDSESEDNDGTAASLAVVFLKKDVGEKASDRKKDDRRRRHKKKERIEEEAEEEGEAEEGGWEKVKGGVPLVKEKPKMFAKGTEINTGVVVKKLSEILQARGKKGTDRAAQIELLHALAGIAAENNLGEGILVKIKFNIIASLYDYNPNLAAFMKADMWKKCLDCIDELLDILFNNNNIFIGENIAEDSENLAISDQPFRVRGCILTLVERMDEEFTKIMQNTDPHSQEYVDNLKDEGRVCGIIDRLLQYLETKGSTEEVCRVYLRRIMHTYYKFDYKAHRRSLGLQGETKSEQDQEESEGDDSAIIMDRLCKFIYAKDRTDRIRTCAILCHIYHHALHSRWYQARDLMLMSHLQDNIQHADPPVQILYNRTMVQLGICAFRQGMIKDAHNALLDIQSSGRAKELLGQGLLMRNMQERNAEQEKIEKRRQVPFHMHINLELLECVYLVSAMLLEIPYMAAHEFDARRRMISKQFHHQLRVGERQPLLGPPESMREHVVAASKAMKMGDWRTCHSFIINEKMNSKVWDLFPEAKCVREMLVRKIQEESLRTYLFTYSSVYDSISMETLSEMFELELPTVHSIISKMIINEELMASLDQPTQTVVMHRTEPTSLQNMALQLAEKLGGLVENNERVFDLKQGVYGGYFNRDQKGGYQQKQGYQRGDQKGGYQQKQNYQRGGYRNQNQSSY.

Disordered stretches follow at residues Met-1–Ala-27, Ala-157–Thr-251, and Glu-266–Gly-300. Basic and acidic residues predominate over residues Lys-200–Glu-210. A compositionally biased stretch (acidic residues) spans Asp-220–Ala-235. Residues Asp-274–Lys-283 show a composition bias toward basic residues. Over residues Glu-287–Gly-299 the composition is skewed to acidic residues. Positions Phe-672–Pro-848 constitute a PCI domain. The span at Gly-890–Arg-919 shows a compositional bias: low complexity. Residues Gly-890–Tyr-926 are disordered.

Belongs to the eIF-3 subunit C family. Component of the eukaryotic translation initiation factor 3 (eIF-3) complex, which is composed of 13 subunits: eif3a, eif3b, eif3c, eif3d, eif3e, eif3f, eif3g, eif3h, eif3i, eif3j, eif3k, eif3l and eif3m.

Its subcellular location is the cytoplasm. Its function is as follows. Component of the eukaryotic translation initiation factor 3 (eIF-3) complex, which is involved in protein synthesis of a specialized repertoire of mRNAs and, together with other initiation factors, stimulates binding of mRNA and methionyl-tRNAi to the 40S ribosome. The eIF-3 complex specifically targets and initiates translation of a subset of mRNAs involved in cell proliferation. The chain is Eukaryotic translation initiation factor 3 subunit C (eif3c) from Danio rerio (Zebrafish).